The primary structure comprises 158 residues: MSVSVCPCGSGNLLDACCGHYHAGTPAPDAQALMRSRYSAYVLGLVDYLVATTLPAQQAGLDRAAMADWSAQSTWLGLEVESAEVLGGQPEHSFVTFTARWHDQDGDHQHRERSAFVQHAGRWYFIDPTVGLKAGRNDPCPCASGHKFKKCCASYVGN.

This sequence belongs to the UPF0225 family.

The protein is UPF0225 protein Pput_1155 of Pseudomonas putida (strain ATCC 700007 / DSM 6899 / JCM 31910 / BCRC 17059 / LMG 24140 / F1).